Consider the following 602-residue polypeptide: Glutamyl-tRNA(Gln) amidotransferase subunit B, mitochondrial (602 aa).

The N-terminal 52 residues, 1 to 52 (MLQQWLRQSPAAAGLLRCSRYRGPQAALLQLSPQRAPTYHAIRSLQTSAAES), are a transit peptide targeting the mitochondrion. The disordered stretch occupies residues 61 to 83 (QLKQGAKGLKAQKRQRRESEEAS).

It belongs to the GatB/GatE family. GatB subfamily. Subunit of the heterotrimeric GatCAB amidotransferase (AdT) complex, composed of A, B and C subunits.

It is found in the mitochondrion. It carries out the reaction L-glutamyl-tRNA(Gln) + L-glutamine + ATP + H2O = L-glutaminyl-tRNA(Gln) + L-glutamate + ADP + phosphate + H(+). Allows the formation of correctly charged Gln-tRNA(Gln) through the transamidation of misacylated Glu-tRNA(Gln) in the mitochondria. The reaction takes place in the presence of glutamine and ATP through an activated gamma-phospho-Glu-tRNA(Gln). This chain is Glutamyl-tRNA(Gln) amidotransferase subunit B, mitochondrial, found in Aspergillus clavatus (strain ATCC 1007 / CBS 513.65 / DSM 816 / NCTC 3887 / NRRL 1 / QM 1276 / 107).